The primary structure comprises 360 residues: Probable dual-specificity RNA methyltransferase RlmN (360 aa).

Catalysis depends on glutamate 91, which acts as the Proton acceptor. The Radical SAM core domain maps to 97–335; it reads QHYGQSVCVT…CVVRQEHGTD (239 aa). Cysteines 104 and 340 form a disulfide. [4Fe-4S] cluster-binding residues include cysteine 111, cysteine 115, and cysteine 118. S-adenosyl-L-methionine is bound by residues 163–164, serine 195, 218–220, and asparagine 296; these read GE and SLH. Catalysis depends on cysteine 340, which acts as the S-methylcysteine intermediate.

This sequence belongs to the radical SAM superfamily. RlmN family. [4Fe-4S] cluster is required as a cofactor.

The protein localises to the cytoplasm. It catalyses the reaction adenosine(2503) in 23S rRNA + 2 reduced [2Fe-2S]-[ferredoxin] + 2 S-adenosyl-L-methionine = 2-methyladenosine(2503) in 23S rRNA + 5'-deoxyadenosine + L-methionine + 2 oxidized [2Fe-2S]-[ferredoxin] + S-adenosyl-L-homocysteine. The catalysed reaction is adenosine(37) in tRNA + 2 reduced [2Fe-2S]-[ferredoxin] + 2 S-adenosyl-L-methionine = 2-methyladenosine(37) in tRNA + 5'-deoxyadenosine + L-methionine + 2 oxidized [2Fe-2S]-[ferredoxin] + S-adenosyl-L-homocysteine. In terms of biological role, specifically methylates position 2 of adenine 2503 in 23S rRNA and position 2 of adenine 37 in tRNAs. The sequence is that of Probable dual-specificity RNA methyltransferase RlmN from Streptococcus equi subsp. zooepidemicus (strain MGCS10565).